Here is a 217-residue protein sequence, read N- to C-terminus: Octanoyltransferase (217 aa).

The BPL/LPL catalytic domain occupies 30-209 (GNRPPTLLLL…AFAEVFGLRP (180 aa)). Substrate is bound by residues 75-82 (RGGDVTYH), 139-141 (AIG), and 152-154 (GFA). The active-site Acyl-thioester intermediate is the C170.

The protein belongs to the LipB family.

It localises to the cytoplasm. It carries out the reaction octanoyl-[ACP] + L-lysyl-[protein] = N(6)-octanoyl-L-lysyl-[protein] + holo-[ACP] + H(+). It participates in protein modification; protein lipoylation via endogenous pathway; protein N(6)-(lipoyl)lysine from octanoyl-[acyl-carrier-protein]: step 1/2. In terms of biological role, catalyzes the transfer of endogenously produced octanoic acid from octanoyl-acyl-carrier-protein onto the lipoyl domains of lipoate-dependent enzymes. Lipoyl-ACP can also act as a substrate although octanoyl-ACP is likely to be the physiological substrate. This Thermus thermophilus (strain ATCC 27634 / DSM 579 / HB8) protein is Octanoyltransferase.